Consider the following 131-residue polypeptide: Profilin-1 (131 aa).

It belongs to the profilin family. Occurs in many kinds of cells as a complex with monomeric actin in a 1:1 ratio. Expressed at low levels roots, leaves, stems, flowers and siliques. Expressed in leaf epidermal cells, trichomes and stem epidermal cells. Detected in phloem exudates (at protein level).

The protein localises to the cytoplasm. Its subcellular location is the cytoskeleton. Functionally, binds to actin monomers and regulates the organization of the actin cytoskeleton. At high concentrations, profilin prevents the polymerization of actin, whereas it enhances it at low concentrations. At low concentrations, associates with the poly-proline motif of formins to enhance actin filament elongation rate. Binds ACT1, ACT7 and ACT11 and inhibits actin polymerization. Coordinates the stochastic dynamic properties of actin filaments by modulating formin-mediated actin nucleation and assembly during axial cell expansion. Binds G-actin and poly-L-proline in vitro. Inhibits cell growth of various pathogenic fungal strains. May play a role as antifungal proteins in the defense system against fungal pathogen attacks. The polypeptide is Profilin-1 (Arabidopsis thaliana (Mouse-ear cress)).